A 126-amino-acid chain; its full sequence is uncharacterized protein (126 aa).

This is an uncharacterized protein from Methanocaldococcus jannaschii (strain ATCC 43067 / DSM 2661 / JAL-1 / JCM 10045 / NBRC 100440) (Methanococcus jannaschii).